The chain runs to 104 residues: MAIIPDKQDNTVLERQEQKLKPPAMFKVVLLNDDFTPMEFVVMIVQEYFNKDRETATQIMLKVHREGRGVCGVYTRDIASTKVEQVVTHARQAGHPLQCVMEEA.

This sequence belongs to the ClpS family. In terms of assembly, binds to the N-terminal domain of the chaperone ClpA.

Functionally, involved in the modulation of the specificity of the ClpAP-mediated ATP-dependent protein degradation. This Paraburkholderia phymatum (strain DSM 17167 / CIP 108236 / LMG 21445 / STM815) (Burkholderia phymatum) protein is ATP-dependent Clp protease adapter protein ClpS.